Consider the following 214-residue polypeptide: Large ribosomal subunit protein uL3 (214 aa).

Residues 131 to 155 (GAQRTSHGNSRSHRVPGSIGMAQDP) form a disordered region. Glutamine 153 is modified (N5-methylglutamine).

Belongs to the universal ribosomal protein uL3 family. As to quaternary structure, part of the 50S ribosomal subunit. Forms a cluster with proteins L14 and L19. In terms of processing, methylated by PrmB.

Functionally, one of the primary rRNA binding proteins, it binds directly near the 3'-end of the 23S rRNA, where it nucleates assembly of the 50S subunit. In Neisseria meningitidis serogroup C (strain 053442), this protein is Large ribosomal subunit protein uL3.